The primary structure comprises 158 residues: Transcription elongation factor GreA (158 aa).

A coiled-coil region spans residues 47–74 (AEYHAAKEEQSHNEGRIAELEDKLARAD).

Belongs to the GreA/GreB family.

Necessary for efficient RNA polymerase transcription elongation past template-encoded arresting sites. The arresting sites in DNA have the property of trapping a certain fraction of elongating RNA polymerases that pass through, resulting in locked ternary complexes. Cleavage of the nascent transcript by cleavage factors such as GreA or GreB allows the resumption of elongation from the new 3'terminus. GreA releases sequences of 2 to 3 nucleotides. The chain is Transcription elongation factor GreA from Bradyrhizobium sp. (strain BTAi1 / ATCC BAA-1182).